We begin with the raw amino-acid sequence, 261 residues long: Adenosylcobinamide-GDP ribazoletransferase (261 aa).

The next 7 helical transmembrane spans lie at 9–29 (LELFLLAVSFFSRIPVPVSLP), 41–61 (YFALVGLLLGAICALVYSLAT), 64–84 (FSTNISVFLTMVLSLLLTGAF), 114–134 (IGTYGSSALIMVLLGKYLLLT), 141–161 (SLVPVWLLAYTLSRAVAASLI), 196–216 (ATLLYFSWQFIGVMIAASLIF), and 235–255 (CLGAAQQLMEILIYLILLAFL).

This sequence belongs to the CobS family. It depends on Mg(2+) as a cofactor.

It localises to the cell inner membrane. It carries out the reaction alpha-ribazole + adenosylcob(III)inamide-GDP = adenosylcob(III)alamin + GMP + H(+). It catalyses the reaction alpha-ribazole 5'-phosphate + adenosylcob(III)inamide-GDP = adenosylcob(III)alamin 5'-phosphate + GMP + H(+). The protein operates within cofactor biosynthesis; adenosylcobalamin biosynthesis; adenosylcobalamin from cob(II)yrinate a,c-diamide: step 7/7. Functionally, joins adenosylcobinamide-GDP and alpha-ribazole to generate adenosylcobalamin (Ado-cobalamin). Also synthesizes adenosylcobalamin 5'-phosphate from adenosylcobinamide-GDP and alpha-ribazole 5'-phosphate. The sequence is that of Adenosylcobinamide-GDP ribazoletransferase from Vibrio cholerae serotype O1 (strain ATCC 39541 / Classical Ogawa 395 / O395).